The primary structure comprises 476 residues: Cyclase-associated protein 1 (476 aa).

Disordered regions lie at residues 224–262 (KPAS…KQGM) and 277–319 (GLRK…PPKM). Over residues 231–243 (KGPPGAPAPPPAP) the composition is skewed to pro residues. Over residues 246–256 (SAESSKPSSSS) the composition is skewed to low complexity. Over residues 280-293 (KVTDDMKTKNRADR) the composition is skewed to basic and acidic residues. A C-CAP/cofactor C-like domain is found at 316–453 (PPKMELQMGR…PDGDWVEHAL (138 aa)).

The protein belongs to the CAP family. Expressed in roots, cotyledons, leaves, stems, flowers, pollen and shoots. Not detected in siliques.

Functionally, actin monomer binding protein that accelerates the exchange of ADP for ATP. Regulates the pool of unpolymerized ATP-actin. Key intermediate between actin-depolymerizing factor (ADF)-mediated disassembly and the profilin-based nucleation and elongation machinery. This chain is Cyclase-associated protein 1 (CAP1), found in Arabidopsis thaliana (Mouse-ear cress).